The following is a 131-amino-acid chain: UPF0102 protein AZC_4471 (131 aa).

It belongs to the UPF0102 family.

This Azorhizobium caulinodans (strain ATCC 43989 / DSM 5975 / JCM 20966 / LMG 6465 / NBRC 14845 / NCIMB 13405 / ORS 571) protein is UPF0102 protein AZC_4471.